Consider the following 838-residue polypeptide: Translation initiation factor IF-2 (838 aa).

A disordered region spans residues 50 to 108 (VQSGKKPESPEKKDIKQNTQKEAPETQTQQKPIEQEVETKQNIDSTPIKVEPKQESLAS). Positions 54-65 (KKPESPEKKDIK) are enriched in basic and acidic residues. Positions 66 to 81 (QNTQKEAPETQTQQKP) are enriched in polar residues. In terms of domain architecture, tr-type G spans 337–506 (SRAPVVTIMG…LLQAELLELK (170 aa)). The interval 346-353 (GHVDHGKT) is G1. 346–353 (GHVDHGKT) contributes to the GTP binding site. The segment at 371-375 (GITQH) is G2. Positions 392 to 395 (DTPG) are G3. Residues 392–396 (DTPGH) and 446–449 (NKMD) each bind GTP. The tract at residues 446-449 (NKMD) is G4. Positions 482 to 484 (SAK) are G5.

This sequence belongs to the TRAFAC class translation factor GTPase superfamily. Classic translation factor GTPase family. IF-2 subfamily.

The protein resides in the cytoplasm. In terms of biological role, one of the essential components for the initiation of protein synthesis. Protects formylmethionyl-tRNA from spontaneous hydrolysis and promotes its binding to the 30S ribosomal subunits. Also involved in the hydrolysis of GTP during the formation of the 70S ribosomal complex. The protein is Translation initiation factor IF-2 of Campylobacter fetus subsp. fetus (strain 82-40).